Consider the following 195-residue polypeptide: Probable molybdenum cofactor guanylyltransferase (195 aa).

Residues leucine 9–glycine 11, lysine 21, aspartate 69, and aspartate 100 contribute to the GTP site. Aspartate 100 is a Mg(2+) binding site.

Belongs to the MobA family. The cofactor is Mg(2+).

The protein localises to the cytoplasm. The enzyme catalyses Mo-molybdopterin + GTP + H(+) = Mo-molybdopterin guanine dinucleotide + diphosphate. Transfers a GMP moiety from GTP to Mo-molybdopterin (Mo-MPT) cofactor (Moco or molybdenum cofactor) to form Mo-molybdopterin guanine dinucleotide (Mo-MGD) cofactor. The protein is Probable molybdenum cofactor guanylyltransferase of Geobacillus sp. (strain WCH70).